We begin with the raw amino-acid sequence, 211 residues long: MSKFQVVEHPLIQHKLSILRRKEASTKEFRELVDEIGMLMAYEVSRDLPLEDVEIETPVQKTTVKQIAGKKLAIVPILRAGIGMVDGILKLIPAARVGHIGMYRDEETLKPVEYLVKLPADIADRQIFLVDPMLATGGSAILAVDSLKKRNAKAENIKFVCLVAAPEGVKALQKAHPDIEIYTAALDEKLNEHGYIVPGLGDAGDRLFGTK.

5-phospho-alpha-D-ribose 1-diphosphate-binding positions include Arg79, Arg104, and 131–139 (DPMLATGGS). Uracil is bound by residues Ile196 and 201–203 (GDA). Asp202 provides a ligand contact to 5-phospho-alpha-D-ribose 1-diphosphate.

This sequence belongs to the UPRTase family. Mg(2+) serves as cofactor.

It catalyses the reaction UMP + diphosphate = 5-phospho-alpha-D-ribose 1-diphosphate + uracil. Its pathway is pyrimidine metabolism; UMP biosynthesis via salvage pathway; UMP from uracil: step 1/1. Allosterically activated by GTP. In terms of biological role, catalyzes the conversion of uracil and 5-phospho-alpha-D-ribose 1-diphosphate (PRPP) to UMP and diphosphate. The chain is Uracil phosphoribosyltransferase from Lactococcus lactis subsp. lactis (strain IL1403) (Streptococcus lactis).